A 764-amino-acid chain; its full sequence is FAST kinase domain-containing protein 5, mitochondrial (764 aa).

Serine 95 is modified (phosphoserine). Lysine 507 is subject to N6-acetyllysine. Residues leucine 697 to glutamate 757 form the RAP domain.

It belongs to the FAST kinase family. Found in a complex with GRSF1, DDX28, DHX30 and FASTKD2. Associates with the 12S mitochondrial rRNA (12S mt-rRNA).

The protein localises to the mitochondrion matrix. Its subcellular location is the mitochondrion nucleoid. In terms of biological role, plays an important role in the processing of non-canonical mitochondrial mRNA precursors. The polypeptide is FAST kinase domain-containing protein 5, mitochondrial (FASTKD5) (Macaca fascicularis (Crab-eating macaque)).